A 151-amino-acid polypeptide reads, in one-letter code: Ribosomal RNA large subunit methyltransferase H (151 aa).

S-adenosyl-L-methionine-binding positions include Leu-73, Gly-100, and 119 to 124 (LSKMTL).

The protein belongs to the RNA methyltransferase RlmH family. In terms of assembly, homodimer.

The protein resides in the cytoplasm. It catalyses the reaction pseudouridine(1915) in 23S rRNA + S-adenosyl-L-methionine = N(3)-methylpseudouridine(1915) in 23S rRNA + S-adenosyl-L-homocysteine + H(+). In terms of biological role, specifically methylates the pseudouridine at position 1915 (m3Psi1915) in 23S rRNA. In Campylobacter lari (strain RM2100 / D67 / ATCC BAA-1060), this protein is Ribosomal RNA large subunit methyltransferase H.